Reading from the N-terminus, the 118-residue chain is UPF0102 protein PC1_0307 (118 aa).

The protein belongs to the UPF0102 family.

The protein is UPF0102 protein PC1_0307 of Pectobacterium carotovorum subsp. carotovorum (strain PC1).